Reading from the N-terminus, the 362-residue chain is Mortality factor 4-like protein 1 (362 aa).

In terms of domain architecture, Tudor-knot spans 12–51 (QEGERVLCFHGPLLYEAKCVKVAIKDKQVKYFIHYSGWNK). The interval 26–62 (YEAKCVKVAIKDKQVKYFIHYSGWNKKSAVRPRRSEK) is interaction with KAT8. Residues 113 to 182 (RELQKANQEQ…RKKRARVDPT (70 aa)) are disordered. Positions 133 to 266 (PGKKTSGLQQ…VAGIKEYFNV (134 aa)) are sufficient for interaction with SIN3A. The short motif at 135-146 (KKTSGLQQKNVE) is the Nuclear localization signal element. K143 is subject to N6-acetyllysine. The tract at residues 164–230 (STSETPQPPR…FYLPAKKNVD (67 aa)) is interaction with RB1-1. Residues 188–342 (TFMNRVEVKV…FLKYLAKNSA (155 aa)) are sufficient for interaction with PHF12. In terms of domain architecture, MRG spans 191-362 (NRVEVKVKIP…APPEYHRKAV (172 aa)). The tract at residues 323–344 (LALLLNYLHDFLKYLAKNSATL) is interaction with RB1-2.

Component of the NuA4 histone acetyltransferase complex which contains the catalytic subunit KAT5/TIP60 and the subunits EP400, TRRAP/PAF400, BRD8/SMAP, EPC1, DMAP1/DNMAP1, RUVBL1/TIP49, RUVBL2, ING3, actin, ACTL6A/BAF53A, MORF4L1/MRG15, MORF4L2/MRGX, MRGBP, YEATS4/GAS41, VPS72/YL1 and MEAF6. The NuA4 complex interacts with MYC and the adenovirus E1A protein. MORF4L1 may also participate in the formation of NuA4 related complexes which lack the KAT5/TIP60 catalytic subunit, but which include the SWI/SNF related protein SRCAP. Component of the mSin3A histone deacetylase complex, which includes SIN3A, HDAC2, ARID4B, MORF4L1, RBBP4/RbAp48, and RBBP7/RbAp46. May also interact with PHF12 and one or more as yet undefined members of the TLE (transducin-like enhancer of split) family of transcriptional repressors. Component of the SIN3B complex, which includes SIN3B, HDAC2 or HDAC1, PHF12 and MORF4L1. Interacts with RB1 and KAT8. Interacts with the N-terminus of MRFAP1. Found in a complex composed of MORF4L1, MRFAP1 and RB1. Interacts with the entire BRCA complex, which contains BRCA1, PALB2, BRCA2 and RAD51. Interacts with PALB2. Forms a complex with MSL1 and NUPR1.

It is found in the nucleus. In terms of biological role, component of the NuA4 histone acetyltransferase (HAT) complex which is involved in transcriptional activation of select genes principally by acetylation of nucleosomal histones H4 and H2A. This modification may both alter nucleosome - DNA interactions and promote interaction of the modified histones with other proteins which positively regulate transcription. This complex may be required for the activation of transcriptional programs associated with oncogene and proto-oncogene mediated growth induction, tumor suppressor mediated growth arrest and replicative senescence, apoptosis, and DNA repair. The NuA4 complex ATPase and helicase activities seem to be, at least in part, contributed by the association of RUVBL1 and RUVBL2 with EP400. NuA4 may also play a direct role in DNA repair when directly recruited to sites of DNA damage. As part of the SIN3B complex represses transcription and counteracts the histone acetyltransferase activity of EP300 through the recognition H3K27ac marks by PHF12 and the activity of the histone deacetylase HDAC2. SIN3B complex is recruited downstream of the constitutively active genes transcriptional start sites through interaction with histones and mitigates histone acetylation and RNA polymerase II progression within transcribed regions contributing to the regulation of transcription. Required for homologous recombination repair (HRR) and resistance to mitomycin C (MMC). Involved in the localization of PALB2, BRCA2 and RAD51, but not BRCA1, to DNA-damage foci. In Mus musculus (Mouse), this protein is Mortality factor 4-like protein 1 (Morf4l1).